Reading from the N-terminus, the 97-residue chain is Serine protease inhibitor Kazal-type 8 (97 aa).

A signal peptide spans 1 to 21 (MKGICSDAILVLATSMWMAFA). The region spanning 36–96 (DKTIVECLKN…TKLYDGQCEN (61 aa)) is the Kazal-like domain. 3 cysteine pairs are disulfide-bonded: C42-C76, C49-C73, and C62-C94. A glycan (N-linked (GlcNAc...) asparagine) is linked at N85.

The protein resides in the secreted. In terms of biological role, probable serine protease inhibitor. This is Serine protease inhibitor Kazal-type 8 (SPINK8) from Homo sapiens (Human).